A 414-amino-acid polypeptide reads, in one-letter code: Isocitrate dehydrogenase [NADP] cytoplasmic (414 aa).

An N-acetylserine modification is found at Ser2. At Tyr42 the chain carries Phosphotyrosine. Position 75–77 (75–77 (TIT)) interacts with NADP(+). A substrate-binding site is contributed by Thr77. An N6-acetyllysine modification is found at Lys81. Arg82 contacts NADP(+). Substrate-binding positions include 94-100 (SPNGTIR) and Arg109. Lys126 is subject to N6-succinyllysine. Arg132 and Lys212 together coordinate substrate. N6-acetyllysine occurs at positions 224, 233, and 243. Asp252 is a binding site for Mn(2+). Lys260 serves as a coordination point for NADP(+). 2 residues coordinate Mn(2+): Asp275 and Asp279. Residue 310 to 315 (GTVTRH) participates in NADP(+) binding. The residue at position 321 (Lys321) is an N6-acetyllysine. Asn328 contributes to the NADP(+) binding site. Ser389 bears the Phosphoserine mark. Residue Lys400 is modified to N6-succinyllysine.

The protein belongs to the isocitrate and isopropylmalate dehydrogenases family. As to quaternary structure, homodimer. Mg(2+) serves as cofactor. It depends on Mn(2+) as a cofactor. Acetylation at Lys-374 dramatically reduces catalytic activity.

It localises to the cytoplasm. The protein resides in the cytosol. The enzyme catalyses D-threo-isocitrate + NADP(+) = 2-oxoglutarate + CO2 + NADPH. Catalyzes the NADP(+)-dependent oxidative decarboxylation of isocitrate (D-threo-isocitrate) to 2-ketoglutarate (2-oxoglutarate), which is required by other enzymes such as the phytanoyl-CoA dioxygenase. Plays a critical role in the generation of NADPH, an important cofactor in many biosynthesis pathways. May act as a corneal epithelial crystallin and may be involved in maintaining corneal epithelial transparency. This chain is Isocitrate dehydrogenase [NADP] cytoplasmic (IDH1), found in Pongo abelii (Sumatran orangutan).